Consider the following 382-residue polypeptide: MKITHITTYRLPPRWMFLKIETDEGVVGWGEPVIEGRARTVEAAVHEFADYLIGKDPARINDLWQVMYRAGFYRGGPIMMSAIAGIDQALWDIKGKVLNAPVWQLMGGLVRDKIKAYSWVGGDRPADVIDGIEKLRGIGFDTFKLNGCEEMGVIDNSRAVDAAVNTVAQIREAFGSEIEFGLDFHGRVSAPMAKVLIKELEPYRPLFIEEPVLAEQEEYYPRLAAQTHIPIAAGERMFSRFEFKRVLDAGGLAILQPDLSHAGGITECYKIAGMAEAYDVALAPHCPLGPIALAACLHIDFVSRNAVFQEQSMGIHYNKGAELLDFVKNKEDFSMDGGFFKPLTKPGLGVDIDEARVIELSKSAPDWRNPLWRHADGSVAEW.

Mg(2+) is bound at residue aspartate 183. Histidine 185 functions as the Proton donor in the catalytic mechanism. Residues glutamate 209 and glutamate 235 each coordinate Mg(2+). Residue histidine 285 is the Proton acceptor of the active site.

Belongs to the mandelate racemase/muconate lactonizing enzyme family. GalD subfamily. The cofactor is Mg(2+).

The catalysed reaction is D-galactonate = 2-dehydro-3-deoxy-D-galactonate + H2O. It functions in the pathway carbohydrate acid metabolism; D-galactonate degradation; D-glyceraldehyde 3-phosphate and pyruvate from D-galactonate: step 1/3. In terms of biological role, catalyzes the dehydration of D-galactonate to 2-keto-3-deoxy-D-galactonate. This chain is D-galactonate dehydratase, found in Salmonella gallinarum (strain 287/91 / NCTC 13346).